The sequence spans 92 residues: MARSLWKGPFVDGYLFKKAEAARGSSRSEVIKIWSRRSTILPQFVGLTFGVHNGQKHIPVYVTEEMVGHKFGEFSPTRTFPGHAADKKAKRR.

Belongs to the universal ribosomal protein uS19 family.

Functionally, protein S19 forms a complex with S13 that binds strongly to the 16S ribosomal RNA. This chain is Small ribosomal subunit protein uS19, found in Methylobacterium radiotolerans (strain ATCC 27329 / DSM 1819 / JCM 2831 / NBRC 15690 / NCIMB 10815 / 0-1).